A 689-amino-acid chain; its full sequence is Beta-adrenergic receptor kinase 1 (689 aa).

Positions 1 to 190 are N-terminal; it reads MADLEAVLAD…ELNIHLTMND (190 aa). One can recognise an RGS domain in the interval 54 to 175; the sequence is TFEKIFSQKL…IESDKFTRFC (122 aa). The region spanning 191–453 is the Protein kinase domain; that stretch reads FSVHRIIGRG…AQEVKESPFF (263 aa). Residues 197–205 and lysine 220 contribute to the ATP site; that span reads IGRGGFGEV. The active-site Proton acceptor is aspartate 317. An AGC-kinase C-terminal domain is found at 454 to 521; the sequence is RSLDWQMVFL…TISERWQQEV (68 aa). The PH domain occupies 558–652; that stretch reads DCIMHGYMSK…WKKELRDAYR (95 aa). Position 670 is a phosphoserine (serine 670).

Belongs to the protein kinase superfamily. AGC Ser/Thr protein kinase family. GPRK subfamily. As to quaternary structure, interacts with the heterodimer formed by GNB1 and GNG2. Interacts with GIT1. Interacts with, and phosphorylates chemokine-stimulated CCR5. Interacts with ARRB1. Interacts with LPAR1 and LPAR2. Interacts with RALA in response to LPAR1 activation. ADRBK1 and RALA mutually inhibit each other's binding to LPAR1. Interacts with ADRB2. In terms of tissue distribution, expressed in peripheral blood leukocytes.

It localises to the cytoplasm. The protein resides in the cell membrane. It is found in the postsynapse. Its subcellular location is the presynapse. It carries out the reaction [beta-adrenergic receptor] + ATP = [beta-adrenergic receptor]-phosphate + ADP + H(+). In contrast to other AGC family kinases, the catalytic activity is solely regulated by the binding of substrates and ligands, not by phosphorylation of the kinase domain. Specifically phosphorylates the agonist-occupied form of the beta-adrenergic and closely related receptors, probably inducing a desensitization of them. Key regulator of LPAR1 signaling. Competes with RALA for binding to LPAR1 thus affecting the signaling properties of the receptor. Desensitizes LPAR1 and LPAR2 in a phosphorylation-independent manner. Positively regulates ciliary smoothened (SMO)-dependent Hedgehog (Hh) signaling pathway by facilitating the trafficking of SMO into the cilium and the stimulation of SMO activity. Inhibits relaxation of airway smooth muscle in response to blue light. This is Beta-adrenergic receptor kinase 1 from Homo sapiens (Human).